Consider the following 361-residue polypeptide: Probable pectinesterase 49 (361 aa).

The N-terminal stretch at 1–22 (MGYISLALVALLVFFASPVVLA) is a signal peptide. An N-linked (GlcNAc...) asparagine glycan is attached at Asn-128. Gln-174 is a substrate binding site. Asp-197 serves as the catalytic Proton donor. Asp-218 serves as the catalytic Nucleophile. Substrate is bound by residues Arg-275 and Trp-277.

Belongs to the pectinesterase family. In terms of tissue distribution, expressed in flower buds.

It is found in the secreted. It localises to the cell wall. The catalysed reaction is [(1-&gt;4)-alpha-D-galacturonosyl methyl ester](n) + n H2O = [(1-&gt;4)-alpha-D-galacturonosyl](n) + n methanol + n H(+). It participates in glycan metabolism; pectin degradation; 2-dehydro-3-deoxy-D-gluconate from pectin: step 1/5. Acts in the modification of cell walls via demethylesterification of cell wall pectin. This Arabidopsis thaliana (Mouse-ear cress) protein is Probable pectinesterase 49 (PME49).